The sequence spans 529 residues: GMP synthase [glutamine-hydrolyzing] (529 aa).

Positions T17–N206 constitute a Glutamine amidotransferase type-1 domain. The active-site Nucleophile is the C93. Catalysis depends on residues H180 and E182. The 198-residue stretch at W207 to R404 folds into the GMPS ATP-PPase domain. S235–T241 contributes to the ATP binding site. Positions 308, 466, 521, and 527 each coordinate XMP.

In terms of assembly, homodimer. Requires Mg(2+) as cofactor.

It localises to the cytoplasm. It is found in the cytosol. It catalyses the reaction XMP + L-glutamine + ATP + H2O = GMP + L-glutamate + AMP + diphosphate + 2 H(+). It participates in purine metabolism; GMP biosynthesis; GMP from XMP (L-Gln route): step 1/1. In terms of biological role, catalyzes the conversion of xanthine monophosphate (XMP) to GMP in the presence of glutamine and ATP through an adenyl-XMP intermediate. The polypeptide is GMP synthase [glutamine-hydrolyzing] (GUA1) (Debaryomyces hansenii (strain ATCC 36239 / CBS 767 / BCRC 21394 / JCM 1990 / NBRC 0083 / IGC 2968) (Yeast)).